Here is a 287-residue protein sequence, read N- to C-terminus: ATP synthase gamma chain (287 aa).

Belongs to the ATPase gamma chain family. As to quaternary structure, F-type ATPases have 2 components, CF(1) - the catalytic core - and CF(0) - the membrane proton channel. CF(1) has five subunits: alpha(3), beta(3), gamma(1), delta(1), epsilon(1). CF(0) has three main subunits: a, b and c.

The protein resides in the cell inner membrane. Produces ATP from ADP in the presence of a proton gradient across the membrane. The gamma chain is believed to be important in regulating ATPase activity and the flow of protons through the CF(0) complex. The polypeptide is ATP synthase gamma chain (Salmonella agona (strain SL483)).